We begin with the raw amino-acid sequence, 108 residues long: UPF0060 membrane protein YnfA (108 aa).

Residues 1–5 (MIKTT) are Periplasmic-facing. The chain crosses the membrane as a helical span at residues 6-26 (LLFFATALCEIIGCFLPWLWL). Residues 27 to 30 (KRNA) are Cytoplasmic-facing. A helical membrane pass occupies residues 31-51 (SIWLLLPAGISLALFVWLLTL). The Periplasmic portion of the chain corresponds to 52–60 (HPAASGRVY). A helical transmembrane segment spans residues 61 to 81 (AAYGGVYVCTALMWLRVVDGV). Residues 82-84 (KLT) lie on the Cytoplasmic side of the membrane. Residues 85–105 (LYDWTGALIALCGMLIIVAGW) form a helical membrane-spanning segment. At 106 to 108 (GRT) the chain is on the periplasmic side.

This sequence belongs to the UPF0060 family.

The protein resides in the cell inner membrane. The protein is UPF0060 membrane protein YnfA of Escherichia coli O139:H28 (strain E24377A / ETEC).